The primary structure comprises 204 residues: Elongation factor Ts (204 aa).

The interval 87-90 is involved in Mg(2+) ion dislocation from EF-Tu; that stretch reads TDFV.

The protein belongs to the EF-Ts family.

The protein resides in the cytoplasm. Its function is as follows. Associates with the EF-Tu.GDP complex and induces the exchange of GDP to GTP. It remains bound to the aminoacyl-tRNA.EF-Tu.GTP complex up to the GTP hydrolysis stage on the ribosome. The chain is Elongation factor Ts from Frankia alni (strain DSM 45986 / CECT 9034 / ACN14a).